Reading from the N-terminus, the 327-residue chain is Tetraspanin-4 (327 aa).

The Cytoplasmic portion of the chain corresponds to 1–6; that stretch reads MRSRSN. A helical transmembrane segment spans residues 7–27; it reads LIGLINFFTFLLSIPILGGGI. Over 28 to 43 the chain is Extracellular; that stretch reads WLSSRANSTDCLRFLQ. A glycan (N-linked (GlcNAc...) asparagine) is linked at asparagine 34. The chain crosses the membrane as a helical span at residues 44-64; that stretch reads WPLIIIGISIMVISLAGIAGA. Topologically, residues 65–75 are cytoplasmic; it reads CYQNKFLMWLY. The chain crosses the membrane as a helical span at residues 76–96; sequence LFTMFFVIAALIGFTIFAYVV. Topologically, residues 97-235 are extracellular; sequence TDKGSGRFVM…LGSLKKSWRK (139 aa). An N-linked (GlcNAc...) asparagine glycan is attached at asparagine 187. A helical transmembrane segment spans residues 236-256; that stretch reads VSVINIVVVIILVIFYVIACA. Residues 257-287 lie on the Cytoplasmic side of the membrane; sequence AYQNVKRMYNDEPVGEARMTNLILVIFKFKE. The chain crosses the membrane as a helical span at residues 288 to 308; sequence ILVQFFFGIVFLLLFNGLMVC. The Extracellular segment spans residues 309–327; the sequence is CCNDKFAFSVFFFGYVTYA.

This sequence belongs to the tetraspanin (TM4SF) family.

It localises to the membrane. Its function is as follows. May be involved in the regulation of cell differentiation. The polypeptide is Tetraspanin-4 (TET4) (Arabidopsis thaliana (Mouse-ear cress)).